The sequence spans 687 residues: DNA ligase (687 aa).

NAD(+)-binding positions include 34–38, 83–84, and Glu-117; these read DAEYD and SL. Residue Lys-119 is the N6-AMP-lysine intermediate of the active site. Arg-140, Glu-182, Lys-298, and Lys-322 together coordinate NAD(+). The Zn(2+) site is built by Cys-416, Cys-419, Cys-434, and Cys-439. The BRCT domain occupies 609–687; it reads EARGPFAGKT…EEEFVRLLKE (79 aa).

Belongs to the NAD-dependent DNA ligase family. LigA subfamily. Requires Mg(2+) as cofactor. Mn(2+) serves as cofactor.

It carries out the reaction NAD(+) + (deoxyribonucleotide)n-3'-hydroxyl + 5'-phospho-(deoxyribonucleotide)m = (deoxyribonucleotide)n+m + AMP + beta-nicotinamide D-nucleotide.. Its function is as follows. DNA ligase that catalyzes the formation of phosphodiester linkages between 5'-phosphoryl and 3'-hydroxyl groups in double-stranded DNA using NAD as a coenzyme and as the energy source for the reaction. It is essential for DNA replication and repair of damaged DNA. This Anaeromyxobacter sp. (strain K) protein is DNA ligase.